Reading from the N-terminus, the 281-residue chain is 2,3,4,5-tetrahydropyridine-2,6-dicarboxylate N-succinyltransferase (281 aa).

This sequence belongs to the transferase hexapeptide repeat family.

It localises to the cytoplasm. The enzyme catalyses (S)-2,3,4,5-tetrahydrodipicolinate + succinyl-CoA + H2O = (S)-2-succinylamino-6-oxoheptanedioate + CoA. The protein operates within amino-acid biosynthesis; L-lysine biosynthesis via DAP pathway; LL-2,6-diaminopimelate from (S)-tetrahydrodipicolinate (succinylase route): step 1/3. This Afipia carboxidovorans (strain ATCC 49405 / DSM 1227 / KCTC 32145 / OM5) (Oligotropha carboxidovorans) protein is 2,3,4,5-tetrahydropyridine-2,6-dicarboxylate N-succinyltransferase.